A 60-amino-acid polypeptide reads, in one-letter code: UI (60 aa).

A compositionally biased stretch (low complexity) spans 1-14 (AAAAGDSAASDLLG). A disordered region spans residues 1–22 (AAAAGDSAASDLLGDNILRSED). V60 bears the Valine amide mark.

It belongs to the sauvagine/corticotropin-releasing factor/urotensin I family.

It localises to the secreted. Urotensin is found in the teleost caudal neurosecretory system. It has a suggested role in osmoregulation and as a corticotropin-releasing factor. The non-hormonal portion of this precursor may be a urotensin binding protein, urophysin. The polypeptide is UI (Platichthys flesus (European flounder)).